Consider the following 101-residue polypeptide: Vacuolar ATPase assembly integral membrane protein VMA21 (101 aa).

The Cytoplasmic portion of the chain corresponds to 1–25 (MERPDKAALNALQPPEFRNESSLAS). The chain crosses the membrane as a helical span at residues 26-46 (TLKTLLFFTALMITVPIGLYF). Residues 47-65 (TTKSYIFEGALGMSNRDSY) lie on the Lumenal side of the membrane. The chain crosses the membrane as a helical span at residues 66 to 86 (FYAAIVAVVAVHVVLALFVYV). At 87–101 (AWNEGSRQWREGKQD) the chain is on the cytoplasmic side.

This sequence belongs to the VMA21 family. Associates with the V0 complex of the vacuolar ATPase (V-ATPase). Interacts with ATP6AP2.

Its subcellular location is the endoplasmic reticulum membrane. It is found in the endoplasmic reticulum-Golgi intermediate compartment membrane. It localises to the cytoplasmic vesicle. The protein localises to the COPII-coated vesicle membrane. In terms of biological role, required for the assembly of the V0 complex of the vacuolar ATPase (V-ATPase) in the endoplasmic reticulum. This chain is Vacuolar ATPase assembly integral membrane protein VMA21, found in Homo sapiens (Human).